A 270-amino-acid polypeptide reads, in one-letter code: Undecaprenyl-diphosphatase (270 aa).

8 helical membrane-spanning segments follow: residues Gly14–Leu34, Gly40–Trp60, Phe88–Ile108, Ser117–Gly137, Ile146–Val166, Phe189–Leu209, Pro221–Leu241, and Leu249–Phe269.

Belongs to the UppP family.

It is found in the cell inner membrane. The catalysed reaction is di-trans,octa-cis-undecaprenyl diphosphate + H2O = di-trans,octa-cis-undecaprenyl phosphate + phosphate + H(+). Functionally, catalyzes the dephosphorylation of undecaprenyl diphosphate (UPP). Confers resistance to bacitracin. This is Undecaprenyl-diphosphatase from Geotalea daltonii (strain DSM 22248 / JCM 15807 / FRC-32) (Geobacter daltonii).